We begin with the raw amino-acid sequence, 607 residues long: Monocarboxylate transporter 7 (607 aa).

Residues Met-1 to Arg-84 form a disordered region. The Cytoplasmic portion of the chain corresponds to Met-1–Gly-105. Residues Gly-106–Ile-126 traverse the membrane as a helical segment. Topologically, residues Lys-127 to Lys-146 are extracellular. Residues Ile-147–Val-167 form a helical membrane-spanning segment. The Cytoplasmic segment spans residues Leu-168 to Arg-175. The helical transmembrane segment at Leu-176–Gln-196 threads the bilayer. Topologically, residues Arg-197 to Tyr-202 are extracellular. A helical membrane pass occupies residues Ile-203–Ile-223. Residues Leu-224–Ser-233 lie on the Cytoplasmic side of the membrane. The chain crosses the membrane as a helical span at residues Val-234 to Ile-254. Residues Thr-255–Leu-268 are Extracellular-facing. A helical transmembrane segment spans residues Phe-269–Ile-289. The Cytoplasmic segment spans residues Gln-290 to Leu-383. A phosphoserine mark is found at Ser-319, Ser-322, Ser-325, and Ser-332. Residues Phe-384–Ile-404 form a helical membrane-spanning segment. The Extracellular segment spans residues Ser-405–Ala-414. Residues Phe-415 to Leu-435 form a helical membrane-spanning segment. Over Asn-436–Lys-442 the chain is Cytoplasmic. A helical transmembrane segment spans residues Ile-443 to Ala-463. Residues Thr-464 to Glu-465 are Extracellular-facing. Residues Phe-466–Thr-486 traverse the membrane as a helical segment. Topologically, residues His-487 to Gly-507 are cytoplasmic. A helical transmembrane segment spans residues Val-508–Val-528. Topologically, residues Asp-529–Arg-536 are extracellular. A helical membrane pass occupies residues Ala-537–Pro-557. Residues Cys-558–Val-607 lie on the Cytoplasmic side of the membrane.

The protein belongs to the major facilitator superfamily. Monocarboxylate porter (TC 2.A.1.13) family. As to quaternary structure, forms functional complexes with BSG/CD147 or EMB/GP70 ancillary proteins.

It localises to the basolateral cell membrane. The catalysed reaction is taurine(out) = taurine(in). Functionally, monocarboxylate transporter selective for taurine. May associate with BSG/CD147 or EMB/GP70 ancillary proteins to mediate facilitative efflux or influx of taurine across the plasma membrane. The transport is pH- and sodium-independent. Rather low-affinity, is likely effective for taurine transport in tissues where taurine is present at high concentrations. This chain is Monocarboxylate transporter 7, found in Mus musculus (Mouse).